The primary structure comprises 165 residues: Inorganic pyrophosphatase (165 aa).

Substrate-binding residues include Lys-21, Arg-35, and Tyr-47. Residues Asp-57, Asp-62, and Asp-94 each contribute to the Mg(2+) site. Tyr-131 contributes to the substrate binding site.

The protein belongs to the PPase family. Homotrimer. In presence of divalent cations the trimers aggregate to form a hexamer. The cofactor is Mg(2+).

It localises to the cytoplasm. The catalysed reaction is diphosphate + H2O = 2 phosphate + H(+). Functionally, catalyzes the hydrolysis of inorganic pyrophosphate (PPi) forming two phosphate ions. This Bacillus sp. (strain PS3) protein is Inorganic pyrophosphatase.